The chain runs to 176 residues: MSNRIAVVPGTFDPVTRGHMDILTRTSRIFNTLYVLVANNPDKTPLLPMHDRVDLVGQALEEYGFPRSEPKCDSESDRNGPIVKIHRFEKGLLVDCCKQLGATVIVRGLISADAHREASMAYANRNMSGIETVFILPDPPLSVVSSSMVRQLIALGGDISPYVPACVTRFFGTHSG.

Residue threonine 11 coordinates substrate. Residues 11 to 12 and histidine 19 contribute to the ATP site; that span reads TF. Substrate is bound by residues lysine 43, leucine 93, and arginine 107. Residues glutamate 117 and 141 to 147 contribute to the ATP site; that span reads LSVVSSS.

Belongs to the bacterial CoaD family. In terms of assembly, homohexamer. Mg(2+) is required as a cofactor.

It localises to the cytoplasm. The catalysed reaction is (R)-4'-phosphopantetheine + ATP + H(+) = 3'-dephospho-CoA + diphosphate. The protein operates within cofactor biosynthesis; coenzyme A biosynthesis; CoA from (R)-pantothenate: step 4/5. In terms of biological role, reversibly transfers an adenylyl group from ATP to 4'-phosphopantetheine, yielding dephospho-CoA (dPCoA) and pyrophosphate. This Tropheryma whipplei (strain TW08/27) (Whipple's bacillus) protein is Phosphopantetheine adenylyltransferase.